We begin with the raw amino-acid sequence, 383 residues long: Decapping nuclease RAI1 (383 aa).

Glutamate 166 lines the a divalent metal cation pocket. Residue glutamate 215 participates in substrate binding. A divalent metal cation-binding residues include aspartate 217, glutamate 235, and leucine 236. Positions 237 and 261 each coordinate substrate.

Belongs to the DXO/Dom3Z family. As to quaternary structure, interacts with RAT1; the interaction is direct, stabilizes RAT1 protein structure and stimulates its exoribonuclease activity. The interaction also stimulates RAI1 pyrophosphohydrolase activity, probably by recruiting it to mRNA substrates. A divalent metal cation is required as a cofactor.

The protein localises to the nucleus. It catalyses the reaction a 5'-end NAD(+)-phospho-ribonucleoside in mRNA + H2O = a 5'-end phospho-ribonucleoside in mRNA + NAD(+) + H(+). The catalysed reaction is a 5'-end (N(7)-methyl 5'-triphosphoguanosine)-ribonucleoside-ribonucleotide in mRNA + H2O = a (N(7)-methyl 5'-triphosphoguanosine)-nucleoside + a 5'-end phospho-ribonucleoside in mRNA + H(+). It carries out the reaction a 5'-end triphospho-ribonucleoside in mRNA + H2O = a 5'-end phospho-ribonucleoside in mRNA + diphosphate + H(+). In terms of biological role, decapping enzyme for NAD-capped RNAs: specifically hydrolyzes the nicotinamide adenine dinucleotide (NAD) cap from a subset of RNAs by removing the entire NAD moiety from the 5'-end of an NAD-capped RNA. The NAD-cap is present at the 5'-end of some RNAs and snoRNAs. In contrast to the canonical 5'-end N7 methylguanosine (m7G) cap, the NAD cap promotes mRNA decay. Also acts as a non-canonical decapping enzyme that removes the entire cap structure of m7G capped or incompletely capped RNAs. Has decapping activity toward incomplete 5'-end m7G cap mRNAs such as unmethylated 5'-end-capped RNA (cap0), while it has no activity toward 2'-O-ribose methylated m7G cap (cap1). Also possesses RNA 5'-pyrophosphohydrolase activity by hydrolyzing the 5'-end triphosphate to release pyrophosphates. Stimulates exoribonuclease activity of Rat1, allowing it to degrade RNAs with stable secondary structure more effectively. This Lachancea thermotolerans (strain ATCC 56472 / CBS 6340 / NRRL Y-8284) (Yeast) protein is Decapping nuclease RAI1.